Reading from the N-terminus, the 511-residue chain is Cobyric acid synthase (511 aa).

A GATase cobBQ-type domain is found at 251–443 (LLDIAIICLP…IHGIFDNDIF (193 aa)). Cys-332 functions as the Nucleophile in the catalytic mechanism. Residue His-435 is part of the active site.

Belongs to the CobB/CobQ family. CobQ subfamily.

It functions in the pathway cofactor biosynthesis; adenosylcobalamin biosynthesis. Functionally, catalyzes amidations at positions B, D, E, and G on adenosylcobyrinic A,C-diamide. NH(2) groups are provided by glutamine, and one molecule of ATP is hydrogenolyzed for each amidation. In Listeria welshimeri serovar 6b (strain ATCC 35897 / DSM 20650 / CCUG 15529 / CIP 8149 / NCTC 11857 / SLCC 5334 / V8), this protein is Cobyric acid synthase.